A 395-amino-acid chain; its full sequence is Serine-type anaerobic sulfatase-maturating enzyme (395 aa).

Residues 18 to 249 (PRSPVPFHIL…QWRKRCDRGR (232 aa)) enclose the Radical SAM core domain. [4Fe-4S] cluster contacts are provided by C35 and C39. Y41 is an S-adenosyl-L-methionine binding site. C42 lines the [4Fe-4S] cluster pocket. G84 and R152 together coordinate S-adenosyl-L-methionine. 3 residues coordinate [4Fe-4S] cluster: C270, C276, and C291. Catalysis depends on D292, which acts as the Proton acceptor. Residues C331, C334, C340, C344, and C357 each coordinate [4Fe-4S] cluster.

This sequence belongs to the radical SAM superfamily. Anaerobic sulfatase-maturating enzyme family. As to quaternary structure, monomer. Interacts with AtsA prior to its export to the periplasm. This interaction depends on the presence of AtsA 'Ser-72'. Binding of SAM to AtsB promotes the formation of a ternary AtsA-AtsB-SAM complex. It depends on [4Fe-4S] cluster as a cofactor.

Its subcellular location is the cytoplasm. The catalysed reaction is L-seryl-[sulfatase] + S-adenosyl-L-methionine = 3-oxo-L-alanyl-[sulfatase] + 5'-deoxyadenosine + L-methionine + H(+). It participates in protein modification; sulfatase oxidation. Its activity is regulated as follows. Activity is inhibited by iron chelators. Involved in 'Ser-type' sulfatase maturation under anaerobic conditions. Catalyzes the post-translational modification of serine ('Ser-72' in the arylsulfatase AtsA) into 3-oxoalanine (also known as C(alpha)-formylglycine (FGly)), by a free radical chemical mechanism initiated via the reductive cleavage of S-adenosyl-L-methionine (SAM). Is capable of catalyzing multiple turnovers. In vitro, use of a peptide substrate in which the target serine is changed to cysteine also gives rise to turnover, supporting approximately 4-fold the activity of that observed with the natural substrate. This chain is Serine-type anaerobic sulfatase-maturating enzyme, found in Klebsiella pneumoniae.